The sequence spans 124 residues: uncharacterized protein (124 aa).

Residues 13-33 traverse the membrane as a helical segment; the sequence is IIFMALYFVITGIVIRLIGYS.

The protein localises to the membrane. This is an uncharacterized protein from Bacillus anthracis.